The sequence spans 579 residues: Type IV pilus assembly ATPase PilB (579 aa).

Residue 340-345 participates in ATP binding; that stretch reads GSGKTV. Zn(2+) contacts are provided by cysteine 470, cysteine 473, cysteine 507, and cysteine 510.

It belongs to the GSP E family. As to quaternary structure, interacts with CpiA.

It is found in the cytoplasm. With respect to regulation, inhibited by the inhibitory protein CpiA. ATPase component of the type IV pilus (T4P). Acts as a molecular motor to provide the energy that is required for biogenesis of the pilus and the extrusion of substrates generated in the cytoplasm. PilB is required for optimal T4P extension and, consequently, efficient natural transformation. May promote processive T4P extension. This Acinetobacter baylyi (strain ATCC 33305 / BD413 / ADP1) protein is Type IV pilus assembly ATPase PilB.